The sequence spans 449 residues: Tubulin beta-5 chain (449 aa).

Residues Gln11, Glu70, Ser139, Gly143, Thr144, Gly145, Asn205, and Asn227 each contribute to the GTP site. Mg(2+) is bound at residue Glu70. Residues 427 to 449 form a disordered region; it reads QDATADEEGEYDVEEEEEGDYET. Positions 430–449 are enriched in acidic residues; it reads TADEEGEYDVEEEEEGDYET.

This sequence belongs to the tubulin family. As to quaternary structure, dimer of alpha and beta chains. A typical microtubule is a hollow water-filled tube with an outer diameter of 25 nm and an inner diameter of 15 nM. Alpha-beta heterodimers associate head-to-tail to form protofilaments running lengthwise along the microtubule wall with the beta-tubulin subunit facing the microtubule plus end conferring a structural polarity. Microtubules usually have 13 protofilaments but different protofilament numbers can be found in some organisms and specialized cells. Mg(2+) is required as a cofactor.

The protein resides in the cytoplasm. It localises to the cytoskeleton. Tubulin is the major constituent of microtubules, a cylinder consisting of laterally associated linear protofilaments composed of alpha- and beta-tubulin heterodimers. Microtubules grow by the addition of GTP-tubulin dimers to the microtubule end, where a stabilizing cap forms. Below the cap, tubulin dimers are in GDP-bound state, owing to GTPase activity of alpha-tubulin. This chain is Tubulin beta-5 chain (TUBB5), found in Arabidopsis thaliana (Mouse-ear cress).